Reading from the N-terminus, the 207-residue chain is Large ribosomal subunit protein uL4 (207 aa).

The tract at residues 48–70 is disordered; sequence KAQKTRSEVSGGGAKPWRQKGTG.

Belongs to the universal ribosomal protein uL4 family. In terms of assembly, part of the 50S ribosomal subunit.

In terms of biological role, one of the primary rRNA binding proteins, this protein initially binds near the 5'-end of the 23S rRNA. It is important during the early stages of 50S assembly. It makes multiple contacts with different domains of the 23S rRNA in the assembled 50S subunit and ribosome. Functionally, forms part of the polypeptide exit tunnel. The protein is Large ribosomal subunit protein uL4 of Francisella tularensis subsp. holarctica (strain FTNF002-00 / FTA).